A 178-amino-acid chain; its full sequence is MNQTENKPKNYTGIVLTLTVLINGLIAVLFFMPKLDQFSHANIHILPMLNAIFNSFTFIFLLAALIMIKQKNIKAHKRFILAAFTTTLLFLICYVTYHSIAENTLYGGEGIMRPIYFFILITHICLSAIIVPLALFTLIRGFSMQVERHKKIARWTMPLWLYVSLTGVIVYLMISPYY.

Transmembrane regions (helical) follow at residues 13-33 (GIVL…FFMP), 48-68 (MLNA…LIMI), 80-100 (ILAA…YHSI), 115-135 (IYFF…PLAL), and 155-175 (WTMP…LMIS).

It localises to the cell membrane. This is an uncharacterized protein from Bacillus subtilis (strain 168).